Reading from the N-terminus, the 265-residue chain is uncharacterized protein (265 aa).

Glu47 contacts thiamine diphosphate. Residues Gln204 to Thr247 are thiamine pyrophosphate binding.

It belongs to the TPP enzyme family. Mg(2+) is required as a cofactor. Thiamine diphosphate serves as cofactor.

Functionally, truncated acetolactase synthase; no longer catalytically active. This is an uncharacterized protein from Haemophilus influenzae (strain ATCC 51907 / DSM 11121 / KW20 / Rd).